A 513-amino-acid chain; its full sequence is Maturase K (513 aa).

The protein belongs to the intron maturase 2 family. MatK subfamily.

Its subcellular location is the plastid. The protein localises to the chloroplast. In terms of biological role, usually encoded in the trnK tRNA gene intron. Probably assists in splicing its own and other chloroplast group II introns. The chain is Maturase K from Panicum capillare (Witchgrass).